The primary structure comprises 275 residues: Formamidopyrimidine-DNA glycosylase (275 aa).

The Schiff-base intermediate with DNA role is filled by proline 2. Residue glutamate 3 is the Proton donor of the active site. The active-site Proton donor; for beta-elimination activity is lysine 58. DNA-binding residues include histidine 93, arginine 111, and arginine 156. The FPG-type zinc-finger motif lies at 241 to 275; sequence FVYDRAGLPCRVCGTPIRQIVQGQRSTYFCPTCQR. The active-site Proton donor; for delta-elimination activity is the arginine 265.

The protein belongs to the FPG family. Monomer. The cofactor is Zn(2+).

It carries out the reaction Hydrolysis of DNA containing ring-opened 7-methylguanine residues, releasing 2,6-diamino-4-hydroxy-5-(N-methyl)formamidopyrimidine.. The enzyme catalyses 2'-deoxyribonucleotide-(2'-deoxyribose 5'-phosphate)-2'-deoxyribonucleotide-DNA = a 3'-end 2'-deoxyribonucleotide-(2,3-dehydro-2,3-deoxyribose 5'-phosphate)-DNA + a 5'-end 5'-phospho-2'-deoxyribonucleoside-DNA + H(+). In terms of biological role, involved in base excision repair of DNA damaged by oxidation or by mutagenic agents. Acts as a DNA glycosylase that recognizes and removes damaged bases. Has a preference for oxidized purines, such as 7,8-dihydro-8-oxoguanine (8-oxoG). Has AP (apurinic/apyrimidinic) lyase activity and introduces nicks in the DNA strand. Cleaves the DNA backbone by beta-delta elimination to generate a single-strand break at the site of the removed base with both 3'- and 5'-phosphates. This is Formamidopyrimidine-DNA glycosylase from Burkholderia ambifaria (strain MC40-6).